A 630-amino-acid chain; its full sequence is A-type voltage-gated potassium channel KCND2 (630 aa).

At 1-184 (MAAGVAAWLP…FENPHTSTMA (184 aa)) the chain is on the cytoplasmic side. The interval 2 to 20 (AAGVAAWLPFARAAAIGWM) is interaction with KCNIP1, KCNIP2, and other family members. The residue at position 38 (T38) is a Phosphothreonine. An interaction with KCNIP1 region spans residues 71-90 (ERDFFYHPETQQYFFDRDPD). The Zn(2+) site is built by H105, C111, C132, and C133. A helical membrane pass occupies residues 185 to 206 (LVFYYVTGFFIAVSVIANVVET). Topologically, residues 207-226 (VPCGSSPGHIKELPCGERYA) are extracellular. A helical transmembrane segment spans residues 227–249 (VAFFCLDTACVMIFTVEYLLRLA). Residues 250-256 (AAPSRYR) lie on the Cytoplasmic side of the membrane. A helical transmembrane segment spans residues 257 to 281 (FVRSVMSIIDVVAILPYYIGLVMTD). Residues 282–287 (NEDVSG) are Extracellular-facing. The chain crosses the membrane as a helical; Voltage-sensor span at residues 288–307 (AFVTLRVFRVFRIFKFSRHS). Topologically, residues 308–321 (QGLRILGYTLKSCA) are cytoplasmic. The tract at residues 308-321 (QGLRILGYTLKSCA) is S4-S5 linker. Residues 322–345 (SELGFLLFSLTMAIIIFATVMFYA) traverse the membrane as a helical segment. The Extracellular segment spans residues 346 to 357 (EKGSSASKFTSI). Residues 358–369 (PAAFWYTIVTMT) constitute an intramembrane region (helical). Residues T370, L371, G372, and Y373 each coordinate K(+). Residues 370–375 (TLGYGD) carry the Selectivity filter motif. An intramembrane segment occupies 370 to 377 (TLGYGDMV). Topologically, residues 378 to 380 (PKT) are extracellular. Residues 381 to 403 (IAGKIFGSICSLSGVLVIALPVP) form a helical membrane-spanning segment. At 404–630 (VIVSNFSRIY…GGNIVRVSAL (227 aa)) the chain is on the cytoplasmic side. S438 carries the post-translational modification Phosphoserine. The interval 474–489 (FETQHHHLLHCLEKTT) is required for dendritic targeting. The important for normal channel activation and inactivation, for interaction with KCNIP2, and probably other family members as well stretch occupies residues 474–630 (FETQHHHLLH…GGNIVRVSAL (157 aa)). Residues S548, S552, S572, and S575 each carry the phosphoserine modification. The interval 600–623 (IPTPPVTTPEGDDRPESPEYSGGN) is disordered. Phosphothreonine is present on residues T602 and T607. The residue at position 616 (S616) is a Phosphoserine. A PDZ-binding motif is present at residues 627–630 (VSAL).

This sequence belongs to the potassium channel family. D (Shal) (TC 1.A.1.2) subfamily. Kv4.2/KCND2 sub-subfamily. Homotetramer or heterotetramer with KCND1 or KCND3. Associates with the regulatory subunits KCNIP2, KCNIP3 and KCNIP4. Interacts with the regulatory subunit KCNIP1; this interaction mediates the capture of both the N- and C-terminus of KCND2, preventing N-type inactivation and stabilizing the S6 conformation, thereby accelerating closed state inactivation and recovery. Interacts with DPP10, DLG4 and DLG1. In vivo, probably exists as heteromeric complex containing variable proportions of KCND1, KCND2, KCND3, KCNIP1, KCNIP2, KCNIP3, KCNIP4, DPP6 and DPP10. The tetrameric channel can associate with up to four regulatory subunits, such as KCNIP2 or KCNIP4. Interaction with KCNIP3 promotes tetramerization and formation of a functional potassium channel. Interaction with four KCNIP4 chains does not reduce interaction with DPP10. Probably part of a complex consisting of KCNIP1, KCNIP2 isoform 3 and KCND2. Interacts with FLNA and FLNC. Interacts with NCS1/FREQ. Identified in a complex with cAMP-dependent protein kinase (PKA), CAV3, AKAP6 and KCND3 in cardiac myocytes. Interacts (via S1 and S2 helices) with DPP6; this interaction stabilizes the conformation of the S1-S2 helices and facilitates S4 conformational change, including S4 sliding up and down, thereby accelerating activation, inactivation, and recovery. Post-translationally, phosphorylation at Ser-438 in response to MAPK activation is increased in stimulated dendrites. Interaction with KCNIP2 and DPP6 propomtes phosphorylation by PKA at Ser-552. Phosphorylation at Ser-552 has no effect on interaction with KCNIP3, but is required for the regulation of channel activity by KCNIP3. Phosphorylation at Ser-552 leads to KCND2 internalization. Phosphorylated by MAPK in response to signaling via the metabotropic glutamate receptor GRM5. Phosphorylation at Ser-616 is required for the down-regulation of neuronal A-type currents in response to signaling via GRM5. As to expression, detected in brain cortex, hippocampus, dentate gyrus, thalamus and cerebellum. Detected in neurons from the primary visual cortex. Detected in the supraoptic nucleus in hypothalamus, in hippocampus and the habenular nucleus of the thalamus. Detected in the bed nucleus of the stria terminalis. Detected in dendritic fields in the hippocampus CA1 layer, in stratum radiatum, stratum oriens, stratum lacunosum-moleculare and stratum pyramidale. Detected in dendritic fields in the hippocampus CA3 layer and in dentate gyrus. Detected in the cerebellum granule cell layer, where it localizes at synapses. Detected in the main olfactory bulb, especially in the granule cell layer and the external plexiform layer, but also the mitral layer. Detected in heart atrium and ventricle. Detected in heart left ventricle (at protein level). Highly expressed in heart and throughout the brain, with similar levels in cortex and hypothalamus, and much higher levels in hippocampus, dentate gyrus and the habenular nucleus of the thalamus. Detected in brain, and at lower levels in heart atrium and ventricle. Detected in neurons from the bed nucleus of the stria terminalis. Detected in aorta, cardiac and smooth muscle.

Its subcellular location is the cell membrane. It is found in the cell projection. The protein localises to the dendrite. The protein resides in the synapse. It localises to the perikaryon. Its subcellular location is the postsynaptic cell membrane. It is found in the dendritic spine. The protein localises to the sarcolemma. The protein resides in the cell junction. It localises to the membrane. Its subcellular location is the caveola. It carries out the reaction K(+)(in) = K(+)(out). Its activity is regulated as follows. Inhibited by 5 mM 4-aminopyridine (4-AP). Not inhibited by dendrotoxins and by tetraethylammonium (TEA). Inhibited by 10 mM flecainide and 20 mM quinidine. Inhibited by the heteropodatoxins HpTx(1), HpTx(2), and HpTx(3). Voltage-gated potassium channel that mediates transmembrane potassium transport in excitable membranes, primarily in the brain, but also in rodent heart. Mediates the major part of the dendritic A-type current I(SA) in brain neurons. This current is activated at membrane potentials that are below the threshold for action potentials. It regulates neuronal excitability, prolongs the latency before the first spike in a series of action potentials, regulates the frequency of repetitive action potential firing, shortens the duration of action potentials and regulates the back-propagation of action potentials from the neuronal cell body to the dendrites. Contributes to the regulation of the circadian rhythm of action potential firing in suprachiasmatic nucleus neurons, which regulates the circadian rhythm of locomotor activity. Functions downstream of the metabotropic glutamate receptor GRM5 and plays a role in neuronal excitability and in nociception mediated by activation of GRM5. Mediates the transient outward current I(to) in rodent heart left ventricle apex cells, but not in human heart, where this current is mediated by another family member. Forms tetrameric potassium-selective channels through which potassium ions pass in accordance with their electrochemical gradient. The channel alternates between opened and closed conformations in response to the voltage difference across the membrane. Can form functional homotetrameric channels and heterotetrameric channels that contain variable proportions of KCND2 and KCND3; channel properties depend on the type of pore-forming alpha subunits that are part of the channel. In vivo, membranes probably contain a mixture of heteromeric potassium channel complexes. Interaction with specific isoforms of the regulatory subunits KCNIP1, KCNIP2, KCNIP3 or KCNIP4 strongly increases expression at the cell surface and thereby increases channel activity; it modulates the kinetics of channel activation and inactivation, shifts the threshold for channel activation to more negative voltage values, shifts the threshold for inactivation to less negative voltages and accelerates recovery after inactivation. Likewise, interaction with DPP6 or DPP10 promotes expression at the cell membrane and regulates both channel characteristics and activity. Upon depolarization, the channel goes from a resting closed state (C state) to an activated but non-conducting state (C* state), from there, the channel may either inactivate (I state) or open (O state). In Rattus norvegicus (Rat), this protein is A-type voltage-gated potassium channel KCND2.